The chain runs to 109 residues: MKGLPPSLRSRKRYIAFRIIAEKKIDERSLSRALSEKMLSLFGECFAASGLRLEAFDGERGIVRCYREALDKVMVALTLMTHVGGVRVIPLTLGVSGTIKRCKRKYLEV.

This sequence belongs to the eukaryotic/archaeal RNase P protein component 2 family. In terms of assembly, consists of a catalytic RNA component and at least 4-5 protein subunits.

It is found in the cytoplasm. It catalyses the reaction Endonucleolytic cleavage of RNA, removing 5'-extranucleotides from tRNA precursor.. Its function is as follows. Part of ribonuclease P, a protein complex that generates mature tRNA molecules by cleaving their 5'-ends. This is Ribonuclease P protein component 2 from Archaeoglobus fulgidus (strain ATCC 49558 / DSM 4304 / JCM 9628 / NBRC 100126 / VC-16).